An 84-amino-acid polypeptide reads, in one-letter code: Small ribosomal subunit protein uS17 (84 aa).

The protein belongs to the universal ribosomal protein uS17 family. As to quaternary structure, part of the 30S ribosomal subunit.

Its function is as follows. One of the primary rRNA binding proteins, it binds specifically to the 5'-end of 16S ribosomal RNA. The polypeptide is Small ribosomal subunit protein uS17 (Clostridium botulinum (strain 657 / Type Ba4)).